The primary structure comprises 837 residues: Anaphase-promoting complex subunit 4 (837 aa).

Composition is skewed to low complexity over residues 59–81 (NDNN…NDNN) and 547–581 (SSSS…NNNN). Disordered regions lie at residues 59 to 89 (NDNN…KSNK) and 547 to 588 (SSSS…QSGN).

It belongs to the APC4 family. In terms of assembly, the APC/C is composed of at least 13 subunits that stay tightly associated throughout the cell cycle: anapc1, anapc2, anapc3, anapc4, anapc5, anapc6, anapc7, anapc8, anapc10, anapc11, cdc20, cdc26 and cdh1.

Its subcellular location is the nucleus. It functions in the pathway protein modification; protein ubiquitination. Component of the anaphase promoting complex/cyclosome (APC/C), a cell cycle-regulated E3 ubiquitin-protein ligase complex that controls progression through mitosis and the G1 phase of the cell cycle. In Dictyostelium discoideum (Social amoeba), this protein is Anaphase-promoting complex subunit 4 (anapc4).